The primary structure comprises 257 residues: Imidazole glycerol phosphate synthase subunit hisF1 (257 aa).

Catalysis depends on residues aspartate 11 and aspartate 130.

It belongs to the HisA/HisF family. As to quaternary structure, heterodimer of HisH and HisF.

The protein localises to the cytoplasm. The enzyme catalyses 5-[(5-phospho-1-deoxy-D-ribulos-1-ylimino)methylamino]-1-(5-phospho-beta-D-ribosyl)imidazole-4-carboxamide + L-glutamine = D-erythro-1-(imidazol-4-yl)glycerol 3-phosphate + 5-amino-1-(5-phospho-beta-D-ribosyl)imidazole-4-carboxamide + L-glutamate + H(+). The protein operates within amino-acid biosynthesis; L-histidine biosynthesis; L-histidine from 5-phospho-alpha-D-ribose 1-diphosphate: step 5/9. Its function is as follows. IGPS catalyzes the conversion of PRFAR and glutamine to IGP, AICAR and glutamate. The HisF subunit catalyzes the cyclization activity that produces IGP and AICAR from PRFAR using the ammonia provided by the HisH subunit. This is Imidazole glycerol phosphate synthase subunit hisF1 (hisF1) from Vibrio vulnificus (strain YJ016).